Here is a 466-residue protein sequence, read N- to C-terminus: Ribulose bisphosphate carboxylase large chain (466 aa).

Lys5 carries the post-translational modification N6,N6,N6-trimethyllysine. Asn114 and Thr164 together coordinate substrate. Lys166 serves as the catalytic Proton acceptor. Lys168 contributes to the substrate binding site. 3 residues coordinate Mg(2+): Lys192, Asp194, and Glu195. Lys192 is modified (N6-carboxylysine). His285 acts as the Proton acceptor in catalysis. Substrate is bound by residues Arg286, His318, and Ser370.

Belongs to the RuBisCO large chain family. Type I subfamily. In terms of assembly, heterohexadecamer of 8 large chains and 8 small chains; disulfide-linked. The disulfide link is formed within the large subunit homodimers. It depends on Mg(2+) as a cofactor. Post-translationally, the disulfide bond which can form in the large chain dimeric partners within the hexadecamer appears to be associated with oxidative stress and protein turnover.

It localises to the plastid. It is found in the chloroplast. The enzyme catalyses 2 (2R)-3-phosphoglycerate + 2 H(+) = D-ribulose 1,5-bisphosphate + CO2 + H2O. The catalysed reaction is D-ribulose 1,5-bisphosphate + O2 = 2-phosphoglycolate + (2R)-3-phosphoglycerate + 2 H(+). In terms of biological role, ruBisCO catalyzes two reactions: the carboxylation of D-ribulose 1,5-bisphosphate, the primary event in carbon dioxide fixation, as well as the oxidative fragmentation of the pentose substrate in the photorespiration process. Both reactions occur simultaneously and in competition at the same active site. In Drosera filiformis (Thread-leaved sundew), this protein is Ribulose bisphosphate carboxylase large chain.